The chain runs to 389 residues: Probable nitrate transporter NarT (389 aa).

12 helical membrane-spanning segments follow: residues 14–34 (TLSL…MPFI), 45–65 (ISII…PFGY), 69–89 (IVGA…PIFF), 97–117 (GMLM…SVGV), 139–159 (GNIG…IIGW), 161–181 (TTVR…FIFG), 211–231 (WYFI…NYLV), 246–266 (GVFI…GDKF), 268–288 (AVKV…ILGI), 294–314 (LFTV…GLIF), 331–351 (IVSM…TYVA), and 353–373 (LTGS…IALF).

This sequence belongs to the major facilitator superfamily. Nitrate/nitrite porter (TC 2.A.1.8) family.

It localises to the cell membrane. Its function is as follows. Probably required for nitrate uptake under anoxic conditions. Also possibly involved in excretion of nitrite produced by the dissimilatory reduction of nitrate. This Staphylococcus aureus (strain USA300) protein is Probable nitrate transporter NarT (narT).